Here is a 392-residue protein sequence, read N- to C-terminus: Pannexin-3 (392 aa).

Residues 1–39 (MSLAHTAAEYMLSDALLPDRRGPRLKGLRLELPLDRIVK) lie on the Cytoplasmic side of the membrane. The helical transmembrane segment at 40 to 60 (FVAVGSPLLLMSLAFAQEFSS) threads the bilayer. The Extracellular portion of the chain corresponds to 61-113 (GSPISCFSPSNFSIRQAAYVDSSCWDSLLHHKQDGPGQDKMKSLWPHKALPYS). N-linked (GlcNAc...) asparagine glycosylation occurs at Asn-71. The chain crosses the membrane as a helical span at residues 114 to 134 (LLALALLMYLPVLLWQYAAVP). Residues 135 to 215 (ALSSDLLFII…VATYLLRNSL (81 aa)) lie on the Cytoplasmic side of the membrane. Residues 216-236 (LLIFTSATYLYLGHFHLDVFF) form a helical membrane-spanning segment. Topologically, residues 237–267 (QEEFSCSIKTGLLSDETHVPNLITCRLTSLS) are extracellular. Residues 268 to 288 (IFQIVSLSSVAIYTILVPVII) traverse the membrane as a helical segment. Over 289–392 (YNLTRLCRWD…LTNSACDEHP (104 aa)) the chain is Cytoplasmic.

The protein belongs to the pannexin family. In terms of assembly, homoheptameric.

Its subcellular location is the cell membrane. It is found in the cell junction. The protein resides in the gap junction. The protein localises to the endoplasmic reticulum membrane. The catalysed reaction is Ca(2+)(in) = Ca(2+)(out). The enzyme catalyses ATP(in) = ATP(out). Functionally, regulator of osteoblast differentiation by functionning as a Ca(2+) channel in the endoplasmic reticulum which regulates calmodulin (CaM) pathways. Allows ATP release into the extracellular space and activation or purinergic receptors. The protein is Pannexin-3 of Homo sapiens (Human).